A 276-amino-acid chain; its full sequence is Large ribosomal subunit protein uL2 (276 aa).

The tract at residues 211–276 is disordered; the sequence is RNRHRGIRPQ…KLIISRRKGK (66 aa). Positions 230–240 are enriched in basic and acidic residues; that stretch reads DHPHGGGEGKK.

It belongs to the universal ribosomal protein uL2 family. In terms of assembly, part of the 50S ribosomal subunit. Forms a bridge to the 30S subunit in the 70S ribosome.

Functionally, one of the primary rRNA binding proteins. Required for association of the 30S and 50S subunits to form the 70S ribosome, for tRNA binding and peptide bond formation. It has been suggested to have peptidyltransferase activity; this is somewhat controversial. Makes several contacts with the 16S rRNA in the 70S ribosome. The chain is Large ribosomal subunit protein uL2 from Campylobacter jejuni subsp. doylei (strain ATCC BAA-1458 / RM4099 / 269.97).